The chain runs to 260 residues: Late transcription factor 1 (260 aa).

It belongs to the chordopoxvirinae VLTF-1 family. As to quaternary structure, interacts with the late transcription factors VLTF-2 and VLTF-3. Interacts with the late transcription elongation factor VLTF-4. Interacts with itself.

Associates with RNA polymerase to initiate transcription from late gene promoters. The polypeptide is Late transcription factor 1 (OPG093) (Homo sapiens (Human)).